Reading from the N-terminus, the 777-residue chain is Transcriptional regulator QRICH1 (777 aa).

At methionine 1 the chain carries N-acetylmethionine. Positions 6–48 (ENTISFEEYIRVKARSVPQHRMKEFLDSLASKGPEALQEFQQT) constitute a CARD domain. 2 disordered regions span residues 140–164 (IQGQAPQSAAPSIQTPSLQSPSPSQ) and 219–240 (ALSPPPSQQGSPREGERRVGTA). Phosphoserine is present on serine 346. Residues lysine 354 and lysine 359 each participate in a glycyl lysine isopeptide (Lys-Gly) (interchain with G-Cter in SUMO2) cross-link. Residues 420–440 (QQQPQQQTAQEQTPPPQQQQQ) are disordered. At serine 465 the chain carries Phosphoserine.

Expressed highly in prefrontal cortex, craniofacial area and near the limbs of mouse embryos. Expressed in heart, skeletal muscle, liver, kidney, lung, brain, spleen, intestine and growth plate in mice.

The protein localises to the nucleus. It localises to the cytoplasm. It is found in the cell membrane. Transcriptional regulator that acts as a mediator of the integrated stress response (ISR) through transcriptional control of protein homeostasis under conditions of ER stress. Controls the outcome of the unfolded protein response (UPR), an ER-stress response pathway that either promotes recovery of ER homeostasis and cell survival, or triggers the terminal UPR which elicits programmed cell death when ER stress is prolonged and unresolved. ER stress induces QRICH1 translation by a ribosome translation re-initiation mechanism in response to EIF2S1/eIF-2-alpha phosphorylation, and stress-induced QRICH1 regulates a transcriptional program associated with protein translation, protein secretion-mediated proteotoxicity and cell death during the terminal UPR. May cooperate with ATF4 transcription factor signaling to regulate ER homeostasis which is critical for cell viability. Up-regulates CASP3/caspase-3 activity in epithelial cells under ER stress. Central regulator of proteotoxicity associated with ER stress-mediated inflammatory diseases in the intestines and liver. Involved in chondrocyte hypertrophy, a process required for normal longitudinal bone growth. The polypeptide is Transcriptional regulator QRICH1 (Mus musculus (Mouse)).